Reading from the N-terminus, the 303-residue chain is Aspartate carbamoyltransferase catalytic subunit (303 aa).

Residues Arg-49 and Thr-50 each coordinate carbamoyl phosphate. L-aspartate is bound at residue Lys-77. Carbamoyl phosphate is bound by residues Arg-99, His-126, and Gln-129. Arg-159 and Arg-211 together coordinate L-aspartate. Carbamoyl phosphate-binding residues include Ser-252 and Pro-253.

This sequence belongs to the aspartate/ornithine carbamoyltransferase superfamily. ATCase family. As to quaternary structure, heterododecamer (2C3:3R2) of six catalytic PyrB chains organized as two trimers (C3), and six regulatory PyrI chains organized as three dimers (R2).

The catalysed reaction is carbamoyl phosphate + L-aspartate = N-carbamoyl-L-aspartate + phosphate + H(+). Its pathway is pyrimidine metabolism; UMP biosynthesis via de novo pathway; (S)-dihydroorotate from bicarbonate: step 2/3. Catalyzes the condensation of carbamoyl phosphate and aspartate to form carbamoyl aspartate and inorganic phosphate, the committed step in the de novo pyrimidine nucleotide biosynthesis pathway. The chain is Aspartate carbamoyltransferase catalytic subunit from Listeria monocytogenes serovar 1/2a (strain ATCC BAA-679 / EGD-e).